Here is a 458-residue protein sequence, read N- to C-terminus: tRNA modification GTPase MnmE (458 aa).

(6S)-5-formyl-5,6,7,8-tetrahydrofolate is bound by residues Arg26, Glu88, and Arg127. The TrmE-type G domain maps to Gly224–Phe378. Asn234 is a binding site for K(+). Residues Asn234–Ser239, Thr253–Thr259, and Asp278–Gly281 each bind GTP. A Mg(2+)-binding site is contributed by Ser238. K(+) is bound by residues Thr253, Ile255, and Thr258. Thr259 contributes to the Mg(2+) binding site. Residue Lys458 participates in (6S)-5-formyl-5,6,7,8-tetrahydrofolate binding.

It belongs to the TRAFAC class TrmE-Era-EngA-EngB-Septin-like GTPase superfamily. TrmE GTPase family. Homodimer. Heterotetramer of two MnmE and two MnmG subunits. The cofactor is K(+).

The protein resides in the cytoplasm. Its function is as follows. Exhibits a very high intrinsic GTPase hydrolysis rate. Involved in the addition of a carboxymethylaminomethyl (cmnm) group at the wobble position (U34) of certain tRNAs, forming tRNA-cmnm(5)s(2)U34. The polypeptide is tRNA modification GTPase MnmE (Streptococcus pyogenes serotype M1).